Consider the following 73-residue polypeptide: Exodeoxyribonuclease 7 small subunit (73 aa).

Belongs to the XseB family. In terms of assembly, heterooligomer composed of large and small subunits.

It is found in the cytoplasm. It carries out the reaction Exonucleolytic cleavage in either 5'- to 3'- or 3'- to 5'-direction to yield nucleoside 5'-phosphates.. Functionally, bidirectionally degrades single-stranded DNA into large acid-insoluble oligonucleotides, which are then degraded further into small acid-soluble oligonucleotides. The sequence is that of Exodeoxyribonuclease 7 small subunit from Streptococcus mutans serotype c (strain ATCC 700610 / UA159).